A 72-amino-acid chain; its full sequence is Hirudin variant-2 (72 aa).

Positions 1–7 (AICVSQA) are cleaved as a signal peptide. An interaction with thrombin active site region spans residues 8–10 (ITY). 3 cysteine pairs are disulfide-bonded: Cys-13–Cys-21, Cys-23–Cys-35, and Cys-29–Cys-46. The segment at 47 to 72 (VTGEGTPNPESHNNGDFEEIPEEYLQ) is disordered. Thr-52 carries an O-linked (GalNAc...) threonine glycan. The segment at 62 to 72 (DFEEIPEEYLQ) is interaction with fibrinogen-binding exosite of thrombin. Over residues 62 to 72 (DFEEIPEEYLQ) the composition is skewed to acidic residues. Tyr-70 is subject to Sulfotyrosine.

Belongs to the protease inhibitor I14 (hirudin) family.

The protein resides in the secreted. Its function is as follows. Hirudin is a potent thrombin-specific protease inhibitor. It forms a stable non-covalent complex with alpha-thrombin, thereby abolishing its ability to cleave fibrinogen. In Hirudo medicinalis (Medicinal leech), this protein is Hirudin variant-2.